The sequence spans 184 residues: Photosystem I assembly protein Ycf4 (184 aa).

Transmembrane regions (helical) follow at residues 22–42 (LCWAIILFLGSLGFLLVGTSS) and 57–77 (ILFFPQGIVMSFYGIAGLFIS).

Belongs to the Ycf4 family.

It localises to the plastid. Its subcellular location is the chloroplast thylakoid membrane. In terms of biological role, seems to be required for the assembly of the photosystem I complex. The polypeptide is Photosystem I assembly protein Ycf4 (Daucus carota (Wild carrot)).